A 787-amino-acid polypeptide reads, in one-letter code: Integrin beta-6 (787 aa).

An N-terminal signal peptide occupies residues Met1 to Gly21. One can recognise a PSI domain in the interval Gly22–Gln71. Residues Gly22–Pro708 are Extracellular-facing. Disulfide bonds link Cys23-Cys41, Cys31-Cys454, Cys34-Cys59, Cys44-Cys70, Cys197-Cys204, Cys252-Cys293, Cys394-Cys406, Cys426-Cys452, Cys456-Cys476, Cys467-Cys479, Cys481-Cys490, Cys492-Cys519, Cys502-Cys517, Cys511-Cys522, Cys524-Cys537, Cys539-Cys560, Cys544-Cys558, Cys552-Cys563, and Cys565-Cys574. N-linked (GlcNAc...) asparagine glycosylation is found at Asn48 and Asn97. The VWFA domain occupies Tyr131 to Leu371. Mg(2+) contacts are provided by Asp140, Ser142, and Ser144. Residues Ser144, Asp147, Asp148, and Glu179 each coordinate Ca(2+). Ca(2+)-binding residues include Asn235, Asp237, Pro239, and Glu240. Glu240 provides a ligand contact to Mg(2+). An N-linked (GlcNAc...) asparagine glycan is attached at Asn260. Positions 271 and 355 each coordinate Ca(2+). The N-linked (GlcNAc...) asparagine glycan is linked to Asn387. Residue Asn418 is glycosylated (N-linked (GlcNAc...) asparagine). 4 consecutive I-EGF domains span residues Cys456–Glu491, Cys492–Gln538, Cys539–Asn575, and Cys576–Glu615. N-linked (GlcNAc...) asparagine glycosylation is found at Asn463 and Asn471. Asn541 carries an N-linked (GlcNAc...) asparagine glycan. Asn575 carries an N-linked (GlcNAc...) asparagine glycan. 9 disulfide bridges follow: Cys576–Cys599, Cys583–Cys597, Cys591–Cys602, Cys604–Cys614, Cys617–Cys620, Cys624–Cys670, Cys630–Cys649, Cys633–Cys645, and Cys678–Cys701. The chain crosses the membrane as a helical span at residues Met709–Trp729. The segment at Lys730 to Thr757 is interaction with HAX1. Residues Lys730–Gly787 lie on the Cytoplasmic side of the membrane.

Belongs to the integrin beta chain family. Heterodimer of an alpha and a beta subunit. Interacts with FLNB. Interacts with HAX1. ITGAV:ITGB6 interacts with FBN1. ITGAV:ITGB6 interacts with TGFB1.

The protein resides in the cell membrane. Its subcellular location is the cell junction. It is found in the focal adhesion. Functionally, integrin alpha-V:beta-6 (ITGAV:ITGB6) is a receptor for fibronectin and cytotactin. It recognizes the sequence R-G-D in its ligands. ITGAV:ITGB6 acts as a receptor for fibrillin-1 (FBN1) and mediates R-G-D-dependent cell adhesion to FBN1. Integrin alpha-V:beta-6 (ITGAV:ITGB6) mediates R-G-D-dependent release of transforming growth factor beta-1 (TGF-beta-1) from regulatory Latency-associated peptide (LAP), thereby playing a key role in TGF-beta-1 activation. The chain is Integrin beta-6 (ITGB6) from Ovis aries (Sheep).